Reading from the N-terminus, the 211-residue chain is Pyridoxine/pyridoxamine 5'-phosphate oxidase (211 aa).

Substrate contacts are provided by residues 7–10 (RREY) and Lys-65. FMN-binding positions include 60-65 (RIVLLK), 75-76 (FT), Lys-82, and Gln-104. Residues Tyr-122, Arg-126, and Ser-130 each contribute to the substrate site. Residues 139 to 140 (QS) and Trp-184 contribute to the FMN site. 190–192 (RLH) contributes to the substrate binding site. Residue Arg-194 participates in FMN binding.

This sequence belongs to the pyridoxamine 5'-phosphate oxidase family. Homodimer. FMN is required as a cofactor.

It catalyses the reaction pyridoxamine 5'-phosphate + O2 + H2O = pyridoxal 5'-phosphate + H2O2 + NH4(+). The catalysed reaction is pyridoxine 5'-phosphate + O2 = pyridoxal 5'-phosphate + H2O2. It participates in cofactor metabolism; pyridoxal 5'-phosphate salvage; pyridoxal 5'-phosphate from pyridoxamine 5'-phosphate: step 1/1. It functions in the pathway cofactor metabolism; pyridoxal 5'-phosphate salvage; pyridoxal 5'-phosphate from pyridoxine 5'-phosphate: step 1/1. Catalyzes the oxidation of either pyridoxine 5'-phosphate (PNP) or pyridoxamine 5'-phosphate (PMP) into pyridoxal 5'-phosphate (PLP). This chain is Pyridoxine/pyridoxamine 5'-phosphate oxidase, found in Teredinibacter turnerae (strain ATCC 39867 / T7901).